Consider the following 1483-residue polypeptide: Ubiquitin fusion degradation protein 4 (1483 aa).

The tract at residues 1-117 (MSENNSHNLD…NNEFGSNPLH (117 aa)) is disordered. The span at 8–18 (NLDEHESHSEN) shows a compositional bias: basic and acidic residues. Acidic residues predominate over residues 61-70 (EADDGEDDDN). Thr87 is subject to Phosphothreonine. Residue Lys349 forms a Glycyl lysine isopeptide (Lys-Gly) (interchain with G-Cter in ubiquitin) linkage. The segment at 1007–1081 (CGVKSDSFIN…LIQLWKNKSK (75 aa)) is K-box. An HECT domain is found at 1376 to 1483 (AEHGYTMDSS…EEGAGAFLLS (108 aa)). The active-site Glycyl thioester intermediate is the Cys1450.

The protein belongs to the UPL family. K-HECT subfamily.

It catalyses the reaction S-ubiquitinyl-[E2 ubiquitin-conjugating enzyme]-L-cysteine + [acceptor protein]-L-lysine = [E2 ubiquitin-conjugating enzyme]-L-cysteine + N(6)-ubiquitinyl-[acceptor protein]-L-lysine.. E3 ubiquitin-protein ligase which accepts ubiquitin from an E2 ubiquitin-conjugating enzyme in the form of a thioester and then directly transfers the ubiquitin to targeted substrates. The protein is Ubiquitin fusion degradation protein 4 (UFD4) of Saccharomyces cerevisiae (strain ATCC 204508 / S288c) (Baker's yeast).